A 156-amino-acid chain; its full sequence is 6,7-dimethyl-8-ribityllumazine synthase (156 aa).

Residues tryptophan 33, serine 64–glutamate 66, and valine 86–leucine 88 contribute to the 5-amino-6-(D-ribitylamino)uracil site. (2S)-2-hydroxy-3-oxobutyl phosphate is bound at residue glutamate 91 to threonine 92. Histidine 94 (proton donor) is an active-site residue. Isoleucine 119 serves as a coordination point for 5-amino-6-(D-ribitylamino)uracil. Arginine 133 serves as a coordination point for (2S)-2-hydroxy-3-oxobutyl phosphate.

Belongs to the DMRL synthase family.

It catalyses the reaction (2S)-2-hydroxy-3-oxobutyl phosphate + 5-amino-6-(D-ribitylamino)uracil = 6,7-dimethyl-8-(1-D-ribityl)lumazine + phosphate + 2 H2O + H(+). The protein operates within cofactor biosynthesis; riboflavin biosynthesis; riboflavin from 2-hydroxy-3-oxobutyl phosphate and 5-amino-6-(D-ribitylamino)uracil: step 1/2. Functionally, catalyzes the formation of 6,7-dimethyl-8-ribityllumazine by condensation of 5-amino-6-(D-ribitylamino)uracil with 3,4-dihydroxy-2-butanone 4-phosphate. This is the penultimate step in the biosynthesis of riboflavin. The polypeptide is 6,7-dimethyl-8-ribityllumazine synthase (Tropheryma whipplei (strain TW08/27) (Whipple's bacillus)).